Consider the following 453-residue polypeptide: Chromosomal replication initiator protein DnaA (453 aa).

The tract at residues 1–78 is domain I, interacts with DnaA modulators; the sequence is MTENEQLFWN…FEIFNAEITA (78 aa). Residues 78–112 form a domain II region; that stretch reads ANYVSNDLHLQETSFSNYQQSSNEVNTLPIRKIDS. The tract at residues 113–331 is domain III, AAA+ region; the sequence is NLKEKYTFAN…GALKNISLVA (219 aa). 4 residues coordinate ATP: G157, G159, K160, and T161. Positions 332 to 453 are domain IV, binds dsDNA; the sequence is DFKHAKTITV…EIETIKNKIR (122 aa).

Belongs to the DnaA family. As to quaternary structure, oligomerizes as a right-handed, spiral filament on DNA at oriC.

The protein resides in the cytoplasm. Plays an essential role in the initiation and regulation of chromosomal replication. ATP-DnaA binds to the origin of replication (oriC) to initiate formation of the DNA replication initiation complex once per cell cycle. Binds the DnaA box (a 9 base pair repeat at the origin) and separates the double-stranded (ds)DNA. Forms a right-handed helical filament on oriC DNA; dsDNA binds to the exterior of the filament while single-stranded (ss)DNA is stabiized in the filament's interior. The ATP-DnaA-oriC complex binds and stabilizes one strand of the AT-rich DNA unwinding element (DUE), permitting loading of DNA polymerase. After initiation quickly degrades to an ADP-DnaA complex that is not apt for DNA replication. Binds acidic phospholipids. This is Chromosomal replication initiator protein DnaA from Streptococcus agalactiae serotype Ia (strain ATCC 27591 / A909 / CDC SS700).